A 321-amino-acid polypeptide reads, in one-letter code: MDKKISISQIKEVVQQAYEQVKGNTGGKNADYIPYLANIDKNLFGISVCLLNGQTITVGDFDYRFGIESVSKVHTAILILRQYGAQKVLEMIGADATGLPFNSIIAILLENDHPSTPLVNAGAISACSMVTPIGNSDKKWDAIVQNITDLCGSAPQLIEELYKSETATNFNNRSIAWLLKNYNRIYDDPNMSLDLYTRQCSLGVTAQMLSVAAGTVANGGVNPVTKKQVFDAELTPKITSMIATVGFYEHSGDWMYTSGIPAKTGVGGGVMGVLPGVFGVSAFAPPLDGSGNSVKAQLAIKYIMNKLGLNVFNGARVTIVD.

The substrate site is built by Ser69, Asn120, Glu165, Asn172, Tyr196, Tyr248, and Val266.

Belongs to the glutaminase family. In terms of assembly, homotetramer.

It carries out the reaction L-glutamine + H2O = L-glutamate + NH4(+). The sequence is that of Glutaminase from Bacteroides fragilis (strain ATCC 25285 / DSM 2151 / CCUG 4856 / JCM 11019 / LMG 10263 / NCTC 9343 / Onslow / VPI 2553 / EN-2).